We begin with the raw amino-acid sequence, 140 residues long: Sperm protein associated with the nucleus on the X chromosome N3 (140 aa).

3 stretches are compositionally biased toward polar residues: residues 1–20 (MEQP…CKSN), 62–79 (INSN…SINP), and 131–140 (EGSSQDSGED). The segment at 1–140 (MEQPTSSTNG…EGSSQDSGED (140 aa)) is disordered.

It belongs to the SPAN-X family.

This chain is Sperm protein associated with the nucleus on the X chromosome N3 (SPANXN3), found in Pan troglodytes (Chimpanzee).